The primary structure comprises 252 residues: Ubiquinone biosynthesis O-methyltransferase (252 aa).

R45, G76, D97, and M141 together coordinate S-adenosyl-L-methionine.

The protein belongs to the methyltransferase superfamily. UbiG/COQ3 family.

It carries out the reaction a 3-demethylubiquinol + S-adenosyl-L-methionine = a ubiquinol + S-adenosyl-L-homocysteine + H(+). It catalyses the reaction a 3-(all-trans-polyprenyl)benzene-1,2-diol + S-adenosyl-L-methionine = a 2-methoxy-6-(all-trans-polyprenyl)phenol + S-adenosyl-L-homocysteine + H(+). It functions in the pathway cofactor biosynthesis; ubiquinone biosynthesis. O-methyltransferase that catalyzes the 2 O-methylation steps in the ubiquinone biosynthetic pathway. The chain is Ubiquinone biosynthesis O-methyltransferase from Caulobacter vibrioides (strain ATCC 19089 / CIP 103742 / CB 15) (Caulobacter crescentus).